Here is a 430-residue protein sequence, read N- to C-terminus: Asparagine--tRNA ligase (430 aa).

This sequence belongs to the class-II aminoacyl-tRNA synthetase family. Homodimer.

The protein resides in the cytoplasm. It catalyses the reaction tRNA(Asn) + L-asparagine + ATP = L-asparaginyl-tRNA(Asn) + AMP + diphosphate + H(+). This Bacillus velezensis (strain DSM 23117 / BGSC 10A6 / LMG 26770 / FZB42) (Bacillus amyloliquefaciens subsp. plantarum) protein is Asparagine--tRNA ligase.